A 221-amino-acid polypeptide reads, in one-letter code: Small ribosomal subunit protein eS1 (221 aa).

This sequence belongs to the eukaryotic ribosomal protein eS1 family.

This is Small ribosomal subunit protein eS1 from Pyrobaculum aerophilum (strain ATCC 51768 / DSM 7523 / JCM 9630 / CIP 104966 / NBRC 100827 / IM2).